Consider the following 472-residue polypeptide: Velvet complex subunit umv2 (472 aa).

4 stretches are compositionally biased toward basic and acidic residues: residues 1-10 (MSRSDTDGRD), 29-59 (SQRR…DSHG), 67-80 (YSRD…HRGD), and 89-105 (SYQR…EQER). Disordered stretches follow at residues 1 to 121 (MSRS…PLEA), 281 to 327 (CDDG…QFGG), and 433 to 472 (SQGI…EDDE). Residues 106–116 (SYGGASASRSS) are compositionally biased toward low complexity. The Velvet domain maps to 158 to 441 (ENGRRYRLVV…ASQGIKIPVR (284 aa)). Polar residues predominate over residues 286–298 (RSSTHPQHASEST). The span at 456–466 (DGMGDYDGASG) shows a compositional bias: gly residues.

Belongs to the velvet family. VelB subfamily. In terms of assembly, component of the heterotrimeric velvet complex composed of laeA, veA and velB; VeA acting as a bridging protein between laeA and velB. Forms a heterodimeric complex with vosA; the formation of the velB-vosA complex is light-dependent.

The protein resides in the nucleus. Its subcellular location is the cytoplasm. Its function is as follows. Component of the velvet transcription factor complex that controls sexual/asexual developmental ratio in response to light, promoting sexual development in the darkness while stimulating asexual sporulation under illumination. The velvet complex acts as a global regulator for secondary metabolite gene expression. Component of the velB-VosA heterodimeric complex that plays a dual role in activating genes associated with spore maturation and repressing certain development-associated genes. The velB-VosA complex binds DNA through the DNA-binding domain of vosA that recognizes an 11-nucleotide consensus sequence 5'-CTGGCCGCGGC-3' consisting of two motifs in the promoters of key developmental regulatory genes. Required for full virulence on seedlings. This Mycosarcoma maydis (Corn smut fungus) protein is Velvet complex subunit umv2.